A 680-amino-acid polypeptide reads, in one-letter code: Tumor protein 63 (680 aa).

The tract at residues methionine 1–methionine 107 is transcription activation. Residues glutamine 123–aspartate 157 are compositionally biased toward polar residues. The disordered stretch occupies residues glutamine 123–tyrosine 171. The DNA-binding element occupies aspartate 170–glutamine 362. Cysteine 244, histidine 247, cysteine 308, and cysteine 312 together coordinate Zn(2+). The span at aspartate 351–arginine 360 shows a compositional bias: basic and acidic residues. Disordered regions lie at residues aspartate 351–arginine 393 and arginine 436–methionine 472. Residues arginine 352–threonine 388 form an interaction with HIPK2 region. A compositionally biased stretch (polar residues) spans arginine 379 to serine 389. The interval arginine 394–histidine 443 is oligomerization. A compositionally biased stretch (low complexity) spans glutamine 437–serine 463. The 67-residue stretch at proline 541–leucine 607 folds into the SAM domain. The interval phenylalanine 610–glutamate 680 is transactivation inhibition. A Glycyl lysine isopeptide (Lys-Gly) (interchain with G-Cter in SUMO) cross-link involves residue lysine 676.

It belongs to the p53 family. Binds DNA as a homotetramer. Isoform composition of the tetramer may determine transactivation activity. Interacts with HIPK2. Interacts with SSRP1, leading to stimulate coactivator activity. Interacts with PDS5A. Interacts (via activation domain) with NOC2L. Interacts with WWP1. Zn(2+) serves as cofactor. In terms of processing, may be sumoylated. Post-translationally, ubiquitinated. Polyubiquitination involves WWP1 and leads to proteasomal degradation of this protein. Widely expressed, notably in thymus, prostate, placenta and skeletal muscle, although the precise isoform varies according to tissue type. Progenitor cell layers of skin, breast and prostate express high levels of DeltaN-type isoforms.

Its subcellular location is the nucleus. In terms of biological role, acts as a sequence specific DNA binding transcriptional activator or repressor. The isoforms contain a varying set of transactivation and auto-regulating transactivation inhibiting domains thus showing an isoform specific activity. May be required in conjunction with TP73/p73 for initiation of p53/TP53 dependent apoptosis in response to genotoxic insults and the presence of activated oncogenes. Involved in Notch signaling by probably inducing JAG1 and JAG2. Activates transcription of the p21 promoter. Activates RIPK4 transcription. Plays a role in the regulation of epithelial morphogenesis. The ratio of DeltaN-type and TA*-type isoforms may govern the maintenance of epithelial stem cell compartments and regulate the initiation of epithelial stratification from the undifferentiated embryonal ectoderm. Required for limb formation from the apical ectodermal ridge. The polypeptide is Tumor protein 63 (Tp63) (Mus musculus (Mouse)).